The sequence spans 475 residues: MAYTQSKSQKVGYQAGVKDYRLTYYTPDYTPKDTDILAAFRVTPQPGVPFEEAAAAVAAESSTGTWTTVWTDLLTDLDRYKGCCYDIEPLPGEDNQFIAYIAYPLDLFEEGSVTNMLTSIVGNVFGFKALKALRLEDLRIPVAYLKTFQGPPHGIQVERDKLNKYGRPLLGCTIKPKLGLSAKNYGRAVYECLRGGLDFTKDDENINSQPFQRWRDRFLFVADAIHKAQAETGEIKGHYLNVTAPTCEEMLKRAEFAKELEMPIIMHDFLTAGFTANTTLSKWCRDNGMLLHIHRAMHAVMDRQKNHGIHFRVLAKCLRMSGGDHIHTGTVVGKLEGDKAVTLGFVDLLRENYIEQDRSRGIYFTQDWASMPGVMAVASGGIHVWHMPALVDIFGDDAVLQFGGGTLGHPWGNAPGATANRVALEACIQARNEGRDLMREGGDIIREAARWSPELAAACELWKEIKFEFEAQDTI.

Substrate is bound by residues asparagine 123 and threonine 173. Lysine 175 (proton acceptor) is an active-site residue. Lysine 177 lines the substrate pocket. 3 residues coordinate Mg(2+): lysine 201, aspartate 203, and glutamate 204. Lysine 201 carries the post-translational modification N6-carboxylysine. Histidine 294 (proton acceptor) is an active-site residue. Substrate-binding residues include arginine 295, histidine 327, and serine 379.

The protein belongs to the RuBisCO large chain family. Type I subfamily. Heterohexadecamer of 8 large chains and 8 small chains; disulfide-linked. The disulfide link is formed within the large subunit homodimers. Interacts with assembly factor Raf1 which helps form the holoenzyme, most interaction (and folding) occurs in the cytoplasm. It depends on Mg(2+) as a cofactor. Post-translationally, the disulfide bond which can form in the large chain dimeric partners within the hexadecamer appears to be associated with oxidative stress and protein turnover.

The protein resides in the carboxysome. It localises to the cytoplasm. It catalyses the reaction 2 (2R)-3-phosphoglycerate + 2 H(+) = D-ribulose 1,5-bisphosphate + CO2 + H2O. It carries out the reaction D-ribulose 1,5-bisphosphate + O2 = 2-phosphoglycolate + (2R)-3-phosphoglycerate + 2 H(+). Its function is as follows. RuBisCO catalyzes two reactions: the carboxylation of D-ribulose 1,5-bisphosphate, the primary event in carbon dioxide fixation, as well as the oxidative fragmentation of the pentose substrate in the photorespiration process. Both reactions occur simultaneously and in competition at the same active site. The sequence is that of Ribulose bisphosphate carboxylase large chain from Thermosynechococcus vestitus (strain NIES-2133 / IAM M-273 / BP-1).